The sequence spans 1074 residues: Phospholipase D1 (1074 aa).

Residues Val-81–Ser-212 enclose the PX domain. Positions Pro-219 to Gln-328 constitute a PH domain. S-palmitoyl cysteine attachment occurs at residues Cys-240 and Cys-241. The region spanning Tyr-459–Arg-486 is the PLD phosphodiesterase 1 domain. Residues His-463–Ala-928 are catalytic. 3 positions are modified to phosphoserine: Ser-499, Ser-561, and Ser-629. In terms of domain architecture, PLD phosphodiesterase 2 spans Glu-891–Ser-918.

The protein belongs to the phospholipase D family. In terms of assembly, interacts with PIP5K1B. In terms of processing, phosphorylated on serine and threonine residues. It is uncertain whether palmitoylation is on Cys-240 and/or Cys-241. Palmitoylation is required prior to phosphorylation.

The protein resides in the cytoplasm. It is found in the perinuclear region. It localises to the endoplasmic reticulum membrane. The protein localises to the golgi apparatus membrane. Its subcellular location is the late endosome membrane. The catalysed reaction is a 1,2-diacyl-sn-glycero-3-phosphocholine + H2O = a 1,2-diacyl-sn-glycero-3-phosphate + choline + H(+). It carries out the reaction ethanol + a 1,2-diacyl-sn-glycero-3-phosphocholine = 1,2-diacyl-sn-glycero-3-phosphoethanol + choline. The enzyme catalyses 1,2-dihexadecanoyl-sn-glycero-3-phosphocholine + H2O = 1,2-dihexadecanoyl-sn-glycero-3-phosphate + choline + H(+). With respect to regulation, stimulated by phosphatidylinositol 4,5-bisphosphate and phosphatidylinositol 3,4,5-trisphosphate, activated by the phosphokinase C-alpha, by the ADP-ribosylation factor-1 (ARF-1), and to a lesser extent by GTP-binding proteins: RHO A, RAC-1 and CDC42. Inhibited by oleate. In terms of biological role, function as phospholipase selective for phosphatidylcholine. Implicated as a critical step in numerous cellular pathways, including signal transduction, membrane trafficking, and the regulation of mitosis. May be involved in the regulation of perinuclear intravesicular membrane traffic. The chain is Phospholipase D1 from Rattus norvegicus (Rat).